The chain runs to 567 residues: Phenylalanine--tRNA ligase beta subunit (567 aa).

Residues 287-362 (YFQEEVEFNV…IGEGLASFHP (76 aa)) enclose the B5 domain. The Mg(2+) site is built by D340, D346, E349, and D350.

The protein belongs to the phenylalanyl-tRNA synthetase beta subunit family. Type 2 subfamily. Tetramer of two alpha and two beta subunits. Mg(2+) serves as cofactor.

It is found in the cytoplasm. It carries out the reaction tRNA(Phe) + L-phenylalanine + ATP = L-phenylalanyl-tRNA(Phe) + AMP + diphosphate + H(+). The polypeptide is Phenylalanine--tRNA ligase beta subunit (Borreliella afzelii (strain PKo) (Borrelia afzelii)).